The sequence spans 299 residues: GTPase Era (299 aa).

The region spanning 2-170 is the Era-type G domain; sequence KTGFVALAGK…LDLIIENLPE (169 aa). Residues 10 to 17 are G1; the sequence is GKPNVGKS. 10-17 serves as a coordination point for GTP; it reads GKPNVGKS. The segment at 36 to 40 is G2; the sequence is QTTRN. The tract at residues 57-60 is G3; sequence DTPG. Residues 57–61 and 119–122 each bind GTP; these read DTPGI and NKID. The segment at 119–122 is G4; the sequence is NKID. The interval 149–151 is G5; that stretch reads TSA. Residues 201 to 278 form the KH type-2 domain; the sequence is TYEEIPHSVA…FLDLHVKVKR (78 aa).

It belongs to the TRAFAC class TrmE-Era-EngA-EngB-Septin-like GTPase superfamily. Era GTPase family. In terms of assembly, monomer.

The protein localises to the cytoplasm. Its subcellular location is the cell inner membrane. Its function is as follows. An essential GTPase that binds both GDP and GTP, with rapid nucleotide exchange. Plays a role in 16S rRNA processing and 30S ribosomal subunit biogenesis and possibly also in cell cycle regulation and energy metabolism. The sequence is that of GTPase Era from Thermosipho melanesiensis (strain DSM 12029 / CIP 104789 / BI429).